Here is a 398-residue protein sequence, read N- to C-terminus: Phosphoglycerate kinase (398 aa).

Substrate is bound by residues 22–24, arginine 38, 61–64, arginine 120, and arginine 153; these read DFN and HLGR. Residues lysine 204, glutamate 326, and 352–355 each bind ATP; that span reads GGDT.

The protein belongs to the phosphoglycerate kinase family. As to quaternary structure, monomer.

The protein resides in the cytoplasm. It carries out the reaction (2R)-3-phosphoglycerate + ATP = (2R)-3-phospho-glyceroyl phosphate + ADP. Its pathway is carbohydrate degradation; glycolysis; pyruvate from D-glyceraldehyde 3-phosphate: step 2/5. The protein is Phosphoglycerate kinase of Geobacter metallireducens (strain ATCC 53774 / DSM 7210 / GS-15).